A 557-amino-acid polypeptide reads, in one-letter code: Urocanate hydratase (557 aa).

Residues 52–53, Gln-130, 176–178, Glu-196, Arg-201, 242–243, 263–267, 273–274, and Tyr-322 each bind NAD(+); these read GG, GMG, NA, QTSAH, and YL. The active site involves Cys-410. Position 492 (Gly-492) interacts with NAD(+).

The protein belongs to the urocanase family. NAD(+) is required as a cofactor.

The protein localises to the cytoplasm. It carries out the reaction 4-imidazolone-5-propanoate = trans-urocanate + H2O. Its pathway is amino-acid degradation; L-histidine degradation into L-glutamate; N-formimidoyl-L-glutamate from L-histidine: step 2/3. Its function is as follows. Catalyzes the conversion of urocanate to 4-imidazolone-5-propionate. In Allorhizobium ampelinum (strain ATCC BAA-846 / DSM 112012 / S4) (Agrobacterium vitis (strain S4)), this protein is Urocanate hydratase.